Reading from the N-terminus, the 428-residue chain is Enolase (428 aa).

Gln-163 serves as a coordination point for (2R)-2-phosphoglycerate. The active-site Proton donor is the Glu-205. The Mg(2+) site is built by Asp-242, Glu-283, and Asp-310. Residues Lys-335, Arg-364, Ser-365, and Lys-386 each contribute to the (2R)-2-phosphoglycerate site. The Proton acceptor role is filled by Lys-335.

It belongs to the enolase family. Mg(2+) serves as cofactor.

It localises to the cytoplasm. The protein localises to the secreted. The protein resides in the cell surface. It carries out the reaction (2R)-2-phosphoglycerate = phosphoenolpyruvate + H2O. It participates in carbohydrate degradation; glycolysis; pyruvate from D-glyceraldehyde 3-phosphate: step 4/5. Its function is as follows. Catalyzes the reversible conversion of 2-phosphoglycerate (2-PG) into phosphoenolpyruvate (PEP). It is essential for the degradation of carbohydrates via glycolysis. The protein is Enolase of Sulfurihydrogenibium sp. (strain YO3AOP1).